Consider the following 246-residue polypeptide: Chalcone--flavanone isomerase 1 (246 aa).

Substrate contacts are provided by T59, N124, and S201.

Belongs to the chalcone isomerase family. In terms of tissue distribution, mostly expressed in siliques and flowers, and, to a lower extent, in leaves.

The catalysed reaction is a chalcone = a flavanone.. It participates in secondary metabolite biosynthesis; flavonoid biosynthesis. Functionally, catalyzes the intramolecular cyclization of bicyclic chalcones into tricyclic (S)-flavanones. Responsible for the isomerization of 4,2',4',6'-tetrahydroxychalcone (also termed chalcone) into naringenin. The sequence is that of Chalcone--flavanone isomerase 1 (CHI1) from Arabidopsis thaliana (Mouse-ear cress).